The sequence spans 813 residues: Serine/threonine-protein kinase kin-29 (813 aa).

A Protein kinase domain is found at 18–269 (YDVGRAIGKG…IQNVLAHRWM (252 aa)). ATP contacts are provided by residues 24 to 32 (IGKGNFATV) and K47. Residue D140 is the Proton acceptor of the active site. Residues 383–412 (LSSPDCDSDDSSNSDLCDESPLSSLEPNHK) are disordered. A compositionally biased stretch (acidic residues) spans 388 to 400 (CDSDDSSNSDLCD).

This sequence belongs to the protein kinase superfamily. CAMK Ser/Thr protein kinase family. SNF1 subfamily. Interacts with tax-6. Requires Mg(2+) as cofactor. Autophosphorylated. Elevated cAMP levels appears to act via PKA to directly or indirectly phosphorylate multiple sites on kin-29 and inhibit function.

It is found in the cytoplasm. Its subcellular location is the nucleus. It carries out the reaction L-seryl-[protein] + ATP = O-phospho-L-seryl-[protein] + ADP + H(+). It catalyses the reaction L-threonyl-[protein] + ATP = O-phospho-L-threonyl-[protein] + ADP + H(+). Regulates chemoreceptor expression by phosphorylating the hda-4 class II histone deacetylase (HDAC) and inhibiting the gene repression functions of hda-4 and the mef-2 transcription factor, enabling the correct sensing and transduction of food signals. Role in determining body size, the dauer decision and serotonin-mediated egg laying. May modulate the Sma/Mab pathway and regulates development in the later larval stages. This is Serine/threonine-protein kinase kin-29 from Caenorhabditis briggsae.